Consider the following 255-residue polypeptide: Type III pantothenate kinase (255 aa).

6 to 13 (DIGNSNID) contacts ATP. Residue 107–110 (GADL) coordinates substrate. The active-site Proton acceptor is Asp-109. Asp-129 is a K(+) binding site. Thr-132 lines the ATP pocket. Residue Thr-183 participates in substrate binding.

The protein belongs to the type III pantothenate kinase family. As to quaternary structure, homodimer. NH4(+) is required as a cofactor. Requires K(+) as cofactor.

The protein localises to the cytoplasm. It catalyses the reaction (R)-pantothenate + ATP = (R)-4'-phosphopantothenate + ADP + H(+). It participates in cofactor biosynthesis; coenzyme A biosynthesis; CoA from (R)-pantothenate: step 1/5. Functionally, catalyzes the phosphorylation of pantothenate (Pan), the first step in CoA biosynthesis. This Dictyoglomus turgidum (strain DSM 6724 / Z-1310) protein is Type III pantothenate kinase.